Reading from the N-terminus, the 803-residue chain is Volume-regulated anion channel subunit LRRC8C (803 aa).

Residues 1–22 (MIPVTEFRQFSEQQPAFRVLKP) lie on the Cytoplasmic side of the membrane. The helical transmembrane segment at 23–43 (WWDVFTDYLSVAMLMIGVFGC) threads the bilayer. At 44-125 (TLQVMQDKII…YERALHWYAK (82 aa)) the chain is on the extracellular side. 2 disulfides stabilise this stretch: Cys54/Cys308 and Cys115/Cys293. N-linked (GlcNAc...) asparagine glycans are attached at residues Asn64 and Asn70. Residues 126–146 (YFPYLVLIHTLVFMLCSNFWF) form a helical membrane-spanning segment. Over 147–266 (KFPGSSSKIE…ILYAMYVRQT (120 aa)) the chain is Cytoplasmic. Residues 177-211 (EVSGEDSEEKDNRKNNMNRSNTIQSGPEGSLVKSQ) are disordered. A compositionally biased stretch (polar residues) spans 191 to 211 (NNMNRSNTIQSGPEGSLVKSQ). Residues Ser212 and Ser215 each carry the phosphoserine modification. Residues 267–287 (VLKVIKFLIIIAYNSALVSKV) form a helical membrane-spanning segment. Topologically, residues 288–320 (QFTVDCNVDIQDMTGYKNFSCNHTMAHLFSKLS) are extracellular. A helical transmembrane segment spans residues 321 to 341 (FCYLCFVSIYGLTCLYTLYWL). Residues 342–803 (FYRSLREYSF…SDVREQMKAD (462 aa)) lie on the Cytoplasmic side of the membrane. LRR repeat units lie at residues 397–420 (ENKL…KLQT), 421–443 (NAHN…VFEI), 446–466 (LQSL…IAQL), 467–488 (DNLQ…ALSF), 490–513 (KENL…MYGL), 515–537 (NLEE…TLES), 541–563 (LKSL…VVDV), 565–587 (SHLQ…NLKK), 588–611 (MTNL…VFSL), 613–635 (SLQE…SFQH), 637–659 (RKLT…IKKL), 660–682 (TSLE…LFLC), 684–705 (KIRY…IGVL), 706–728 (QSLQ…LYFC), 730–751 (KLKT…IGNL), 752–774 (LFLS…LGDC), and 776–799 (ALKR…VREQ).

Belongs to the LRRC8 family. As to quaternary structure, heterohexamer; oligomerizes with other LRRC8 proteins (LRRC8A, LRRC8B, LRRC8D and/or LRRC8E) to form a heterohexamer. Homoheptamer; inactive, likely because it is not targeted to the plasma membrane in the absence of LRRC8A. In vivo, the subunit composition may depend primarily on expression levels, and heterooligomeric channels containing various proportions of the different LRRC8 proteins may coexist.

Its subcellular location is the cell membrane. The protein localises to the endoplasmic reticulum membrane. It catalyses the reaction chloride(in) = chloride(out). It carries out the reaction iodide(out) = iodide(in). The catalysed reaction is taurine(out) = taurine(in). The enzyme catalyses 2',3'-cGAMP(out) = 2',3'-cGAMP(in). Its function is as follows. Non-essential component of the volume-regulated anion channel (VRAC, also named VSOAC channel), an anion channel required to maintain a constant cell volume in response to extracellular or intracellular osmotic changes. The VRAC channel conducts iodide better than chloride and can also conduct organic osmolytes like taurine. Plays a redundant role in the efflux of amino acids, such as aspartate and glutamate, in response to osmotic stress. The VRAC channel also mediates transport of immunoreactive cyclic dinucleotide GMP-AMP (2'-3'-cGAMP), an immune messenger produced in response to DNA virus in the cytosol. Channel activity requires LRRC8A plus at least one other family member (LRRC8B, LRRC8C, LRRC8D or LRRC8E); channel characteristics depend on the precise subunit composition. This is Volume-regulated anion channel subunit LRRC8C from Rattus norvegicus (Rat).